Consider the following 434-residue polypeptide: Cobyrinate a,c-diamide synthase (434 aa).

In terms of domain architecture, GATase cobBQ-type spans 240-430 (KAYVAYDSAF…SHFHFSRTRR (191 aa)). The active-site Nucleophile is the C322.

Belongs to the CobB/CbiA family. Mg(2+) serves as cofactor.

The catalysed reaction is cob(II)yrinate + 2 L-glutamine + 2 ATP + 2 H2O = cob(II)yrinate a,c diamide + 2 L-glutamate + 2 ADP + 2 phosphate + 2 H(+). Its pathway is cofactor biosynthesis; adenosylcobalamin biosynthesis; cob(II)yrinate a,c-diamide from sirohydrochlorin (anaerobic route): step 10/10. Functionally, catalyzes the ATP-dependent amidation of the two carboxylate groups at positions a and c of cobyrinate, using either L-glutamine or ammonia as the nitrogen source. The sequence is that of Cobyrinate a,c-diamide synthase from Sulfolobus acidocaldarius (strain ATCC 33909 / DSM 639 / JCM 8929 / NBRC 15157 / NCIMB 11770).